Here is a 107-residue protein sequence, read N- to C-terminus: MKVVAIFLASCVLFSLIPTHLSHEEPKVAPTEELMFAPSNQPRYCRSRQVFDGSCTDRGTPRTTCFLDFLGARSASEMPKNCDCTPQPNNKRLCECSVICTDCCVKN.

The first 22 residues, 1–22, serve as a signal peptide directing secretion; the sequence is MKVVAIFLASCVLFSLIPTHLS. Intrachain disulfides connect Cys45/Cys100, Cys55/Cys84, Cys65/Cys94, and Cys82/Cys96.

This sequence belongs to the DEFL family.

The protein localises to the secreted. In Arabidopsis thaliana (Mouse-ear cress), this protein is Defensin-like protein 242 (SCRL10).